A 275-amino-acid polypeptide reads, in one-letter code: 2,3,4,5-tetrahydropyridine-2,6-dicarboxylate N-succinyltransferase (275 aa).

It belongs to the transferase hexapeptide repeat family.

The protein resides in the cytoplasm. It carries out the reaction (S)-2,3,4,5-tetrahydrodipicolinate + succinyl-CoA + H2O = (S)-2-succinylamino-6-oxoheptanedioate + CoA. It participates in amino-acid biosynthesis; L-lysine biosynthesis via DAP pathway; LL-2,6-diaminopimelate from (S)-tetrahydrodipicolinate (succinylase route): step 1/3. The polypeptide is 2,3,4,5-tetrahydropyridine-2,6-dicarboxylate N-succinyltransferase (Burkholderia ambifaria (strain MC40-6)).